The following is a 260-amino-acid chain: MALPDFSMRQLLEAGIHFGHQTHRWNPKMAPYIYGARNNIHIIDLSQTVPLLHQALKQVSDTVAKGGRVLFVGTKRQASDIVADAAQRSAQYYVNSRWLGGMLTNWKTISNSIQRLRKLDEMLAGEAQGLTKKERLNLDREREKLDKALGGIKDMGSTPDLMFVIDTNKEAIAILEAKRLGIPVVAIIDSNCDPDKIDFPIPGNDDAARAIQLYCDLIAKAAIDGIARQQGALGVDIGASVEAPVEPALDPAPSTEAPQA.

Belongs to the universal ribosomal protein uS2 family.

This chain is Small ribosomal subunit protein uS2, found in Mesorhizobium japonicum (strain LMG 29417 / CECT 9101 / MAFF 303099) (Mesorhizobium loti (strain MAFF 303099)).